The following is a 207-amino-acid chain: Adenylyl-sulfate kinase (207 aa).

39–46 (GLSGAGKS) provides a ligand contact to ATP. Ser113 acts as the Phosphoserine intermediate in catalysis.

This sequence belongs to the APS kinase family.

It catalyses the reaction adenosine 5'-phosphosulfate + ATP = 3'-phosphoadenylyl sulfate + ADP + H(+). It functions in the pathway sulfur metabolism; hydrogen sulfide biosynthesis; sulfite from sulfate: step 2/3. Functionally, catalyzes the synthesis of activated sulfate. This chain is Adenylyl-sulfate kinase, found in Vibrio vulnificus (strain CMCP6).